Here is a 396-residue protein sequence, read N- to C-terminus: Protein ANTAGONIST OF LIKE HETEROCHROMATIN PROTEIN 1 (396 aa).

2 stretches are compositionally biased toward basic residues: residues 1-12 and 20-29; these read MAPVKQKKKNKK and KLAKNKEKKR. The segment at 1–29 is disordered; that stretch reads MAPVKQKKKNKKKPLDKAKKLAKNKEKKR. Positions 6–13 match the Nuclear localization signal motif; that stretch reads QKKKNKKK. Residues 183 to 348 enclose the DDE Tnp4 domain; sequence IDTTHIIMTL…IILVCCLLHN (166 aa).

It belongs to the HARBI1 family. Interacts with core components of POLYCOMB REPRESSIVE COMPLEX 2 (PRC2), a PcG protein complex with H3K27me3 histone methyltransferase activity. Associates with plant-specific PRC2 accessory components such as MSI1, EMF2, VRN2, FIE and CLF. The cofactor is a divalent metal cation. In terms of tissue distribution, expressed in roots, inflorescence stems, seedlings, leaves, flower buds, inflorescences, and siliques.

The protein resides in the nucleus. Functionally, transposase-derived protein that may have nuclease activity. Antagonist of polycomb-group (PcG) protein-mediated chromatin silencing, probably by preventing the association of POLYCOMB REPRESSIVE COMPLEX 2 (PRC2) with its accessory components. Needed for full reactivation of several floral homeotic genes that are repressed by PcG. The chain is Protein ANTAGONIST OF LIKE HETEROCHROMATIN PROTEIN 1 from Arabidopsis thaliana (Mouse-ear cress).